We begin with the raw amino-acid sequence, 175 residues long: B9 domain-containing protein 2 (175 aa).

Residues 2–118 form the C2 B9-type domain; sequence AELHIIGQII…QCVTWRPLGS (117 aa).

This sequence belongs to the B9D family. As to quaternary structure, part of the tectonic-like complex (also named B9 complex).

It localises to the cytoplasm. The protein localises to the cytoskeleton. Its subcellular location is the cilium basal body. The protein resides in the cilium axoneme. Functionally, component of the tectonic-like complex, a complex localized at the transition zone of primary cilia and acting as a barrier that prevents diffusion of transmembrane proteins between the cilia and plasma membranes. The chain is B9 domain-containing protein 2 (b9d2) from Danio rerio (Zebrafish).